A 603-amino-acid polypeptide reads, in one-letter code: NADH-quinone oxidoreductase subunit C/D (603 aa).

The interval 1–193 (MVNNMTDLTA…DPFTLTKQKE (193 aa)) is NADH dehydrogenase I subunit C. The tract at residues 217-603 (DFMFLNLGPN…IDFVMSDVDR (387 aa)) is NADH dehydrogenase I subunit D.

In the N-terminal section; belongs to the complex I 30 kDa subunit family. The protein in the C-terminal section; belongs to the complex I 49 kDa subunit family. In terms of assembly, NDH-1 is composed of 13 different subunits. Subunits NuoB, CD, E, F, and G constitute the peripheral sector of the complex.

The protein localises to the cell inner membrane. The catalysed reaction is a quinone + NADH + 5 H(+)(in) = a quinol + NAD(+) + 4 H(+)(out). Its function is as follows. NDH-1 shuttles electrons from NADH, via FMN and iron-sulfur (Fe-S) centers, to quinones in the respiratory chain. The immediate electron acceptor for the enzyme in this species is believed to be ubiquinone. Couples the redox reaction to proton translocation (for every two electrons transferred, four hydrogen ions are translocated across the cytoplasmic membrane), and thus conserves the redox energy in a proton gradient. The sequence is that of NADH-quinone oxidoreductase subunit C/D from Cronobacter sakazakii (strain ATCC BAA-894) (Enterobacter sakazakii).